We begin with the raw amino-acid sequence, 278 residues long: 4-deoxy-L-threo-5-hexosulose-uronate ketol-isomerase (278 aa).

Residues histidine 196, histidine 198, glutamate 203, and histidine 245 each coordinate Zn(2+).

It belongs to the KduI family. Zn(2+) is required as a cofactor.

It catalyses the reaction 5-dehydro-4-deoxy-D-glucuronate = 3-deoxy-D-glycero-2,5-hexodiulosonate. It functions in the pathway glycan metabolism; pectin degradation; 2-dehydro-3-deoxy-D-gluconate from pectin: step 4/5. Functionally, catalyzes the isomerization of 5-dehydro-4-deoxy-D-glucuronate to 3-deoxy-D-glycero-2,5-hexodiulosonate. The polypeptide is 4-deoxy-L-threo-5-hexosulose-uronate ketol-isomerase (Yersinia pestis bv. Antiqua (strain Antiqua)).